The primary structure comprises 408 residues: Serine/threonine transporter SstT (408 aa).

The next 9 helical transmembrane spans lie at 11-31, 43-63, 82-102, 141-161, 192-212, 216-236, 290-310, 316-336, and 363-383; these read LANGSLVLQILVGIIAGVSLA, FLGSLFVGALKAIAPILVFIL, IVVLYLFGTFAAALTAVLLSM, ALMTGNYIGILAWGVGLGLAL, IGIFGLVAATFAETGFAAIAG, LLAVLLGAMAIIALIVNPLIV, IPLGATINMGGAAITITVLTL, LGIQVDLLTALLLSVVAAISA, and VAMQVVAVGFIIGVIQDAAET.

This sequence belongs to the dicarboxylate/amino acid:cation symporter (DAACS) (TC 2.A.23) family.

Its subcellular location is the cell inner membrane. It carries out the reaction L-serine(in) + Na(+)(in) = L-serine(out) + Na(+)(out). The catalysed reaction is L-threonine(in) + Na(+)(in) = L-threonine(out) + Na(+)(out). Its function is as follows. Involved in the import of serine and threonine into the cell, with the concomitant import of sodium (symport system). The sequence is that of Serine/threonine transporter SstT from Shewanella sp. (strain MR-4).